Consider the following 383-residue polypeptide: Probable aspartate/prephenate aminotransferase (383 aa).

L-aspartate is bound by residues Gly-39, Trp-125, and Asn-175. The residue at position 234 (Lys-234) is an N6-(pyridoxal phosphate)lysine. Arg-361 contacts L-aspartate.

It belongs to the class-I pyridoxal-phosphate-dependent aminotransferase family. Homodimer. Requires pyridoxal 5'-phosphate as cofactor.

It localises to the cytoplasm. The enzyme catalyses L-aspartate + 2-oxoglutarate = oxaloacetate + L-glutamate. The catalysed reaction is L-arogenate + oxaloacetate = prephenate + L-aspartate. In terms of biological role, catalyzes the reversible conversion of aspartate and 2-oxoglutarate to glutamate and oxaloacetate. Can also transaminate prephenate in the presence of aspartate. This Thermus aquaticus protein is Probable aspartate/prephenate aminotransferase (aspC).